Consider the following 621-residue polypeptide: Methionine--tRNA ligase (621 aa).

Positions 11–21 match the 'HIGH' region motif; it reads PYANGPRHIGH. 4 residues coordinate Zn(2+): cysteine 143, cysteine 146, cysteine 156, and cysteine 159. The 'KMSKS' region signature appears at 347–351; it reads KFSSS. Position 350 (serine 350) interacts with ATP.

It belongs to the class-I aminoacyl-tRNA synthetase family. MetG type 1 subfamily. Monomer. Zn(2+) serves as cofactor.

The protein localises to the cytoplasm. It catalyses the reaction tRNA(Met) + L-methionine + ATP = L-methionyl-tRNA(Met) + AMP + diphosphate. Is required not only for elongation of protein synthesis but also for the initiation of all mRNA translation through initiator tRNA(fMet) aminoacylation. The polypeptide is Methionine--tRNA ligase (Bifidobacterium longum (strain NCC 2705)).